The sequence spans 318 residues: MIDKHGRNIDYLRISVTDRCNLRCIYCMPKMKGYIQENNKISCSDIFKLLRAAVSVGINKVRYTGGEPLLNEEISKIIYETSKLPQINDIAITTNGILLPQMAKDLKKAGLKRVNISLDTLKSDTFTKITNFNQITKVIDGIDTCLKLNLKPVKINTVLIKGINDLEVNDFVNLSREMPVEIRFIELMPIGEGAKIYEKGRVNIKELLMSRSDLIPIESLQNSTANMYKIKGGKGRIGYITPISCKFCSTCNKIRLTSMGTIKPCLHSNQEIDLKPYLNNEDVLVEKLKTIIFNKTFQHHINEENISRSKKMMYQIGG.

Residues 4–218 enclose the Radical SAM core domain; it reads KHGRNIDYLR…MSRSDLIPIE (215 aa). Arg-13 is a GTP binding site. Cys-20 and Cys-24 together coordinate [4Fe-4S] cluster. S-adenosyl-L-methionine is bound at residue Tyr-26. Residue Cys-27 coordinates [4Fe-4S] cluster. Position 62 (Arg-62) interacts with GTP. Gly-66 serves as a coordination point for S-adenosyl-L-methionine. Thr-93 is a GTP binding site. Ser-117 lines the S-adenosyl-L-methionine pocket. Lys-154 contributes to the GTP binding site. S-adenosyl-L-methionine is bound at residue Met-188. [4Fe-4S] cluster is bound by residues Cys-248 and Cys-251. Residue 253–255 coordinates GTP; it reads KIR. Cys-265 contributes to the [4Fe-4S] cluster binding site.

It belongs to the radical SAM superfamily. MoaA family. Monomer and homodimer. [4Fe-4S] cluster is required as a cofactor.

The enzyme catalyses GTP + AH2 + S-adenosyl-L-methionine = (8S)-3',8-cyclo-7,8-dihydroguanosine 5'-triphosphate + 5'-deoxyadenosine + L-methionine + A + H(+). It participates in cofactor biosynthesis; molybdopterin biosynthesis. Its function is as follows. Catalyzes the cyclization of GTP to (8S)-3',8-cyclo-7,8-dihydroguanosine 5'-triphosphate. In Clostridium acetobutylicum (strain ATCC 824 / DSM 792 / JCM 1419 / IAM 19013 / LMG 5710 / NBRC 13948 / NRRL B-527 / VKM B-1787 / 2291 / W), this protein is GTP 3',8-cyclase.